Here is a 188-residue protein sequence, read N- to C-terminus: UPF0301 protein ABO_0112 (188 aa).

This sequence belongs to the UPF0301 (AlgH) family.

This chain is UPF0301 protein ABO_0112, found in Alcanivorax borkumensis (strain ATCC 700651 / DSM 11573 / NCIMB 13689 / SK2).